The sequence spans 157 residues: UPF0262 protein RHE_CH00582 (157 aa).

Belongs to the UPF0262 family.

This chain is UPF0262 protein RHE_CH00582, found in Rhizobium etli (strain ATCC 51251 / DSM 11541 / JCM 21823 / NBRC 15573 / CFN 42).